We begin with the raw amino-acid sequence, 415 residues long: uncharacterized protein (415 aa).

The next 10 helical transmembrane spans lie at 20–40 (MAYLFYFITAFLLGTEAFGIL), 43–63 (LMPIADTLTIFFSSGIPPAIA), 78–98 (IPILYLMILLSVVGFILTPYI), 109–129 (LPNILYFAVGLCVVASTVIAF), 155–175 (VILVFILTLYLGIFGSLLSIS), 243–263 (IVIMSIMGGFWSGIYGYSSLI), 300–320 (IFSSIFVIGCLFFPEIPLIAF), 328–348 (GILCLRILAISSLFMSYYTLI), 360–380 (ISFYIILFGLVLNIILNLILV), and 388–408 (GSLATLITSISVFLIGVFAIL).

The protein belongs to the polysaccharide synthase family.

It is found in the cell membrane. This is an uncharacterized protein from Methanocaldococcus jannaschii (strain ATCC 43067 / DSM 2661 / JAL-1 / JCM 10045 / NBRC 100440) (Methanococcus jannaschii).